The primary structure comprises 631 residues: Polyadenylate-binding protein, cytoplasmic and nuclear (631 aa).

The disordered stretch occupies residues 1 to 56 (MSDLQESLEKLSINEKAPQAPADDATPSNTTTLEKESSESAAAAAGEGAGEEGEEA). 4 consecutive RRM domains span residues 58 to 136 (ASLY…WSQR), 146 to 223 (GNIF…KHVS), 239 to 316 (TNVY…RAQK), and 342 to 419 (VNLF…LAQR). The segment at 518 to 545 (GGEFNGPNGQRQQRGAYPPNRNQKGGRP) is disordered. A PABC domain is found at 545–626 (PQRDLAAIIS…ALTAFEEYKK (82 aa)).

The protein belongs to the polyadenylate-binding protein type-1 family.

It localises to the cytoplasm. Its subcellular location is the nucleus. Its function is as follows. Binds the poly(A) tail of mRNA. Appears to be an important mediator of the multiple roles of the poly(A) tail in mRNA biogenesis, stability and translation. In the nucleus, involved in both mRNA cleavage and polyadenylation. Is also required for efficient mRNA export to the cytoplasm. Acts in concert with a poly(A)-specific nuclease (PAN) to affect poly(A) tail shortening, which may occur concomitantly with either nucleocytoplasmic mRNA transport or translational initiation. In the cytoplasm, stimulates translation initiation and regulates mRNA decay through translation termination-coupled poly(A) shortening, probably mediated by PAN. This chain is Polyadenylate-binding protein, cytoplasmic and nuclear (PAB1), found in Meyerozyma guilliermondii (strain ATCC 6260 / CBS 566 / DSM 6381 / JCM 1539 / NBRC 10279 / NRRL Y-324) (Yeast).